A 181-amino-acid polypeptide reads, in one-letter code: Mating-type M-specific polypeptide Mc (181 aa).

Residues 103 to 171 constitute a DNA-binding region (HMG box); the sequence is TPRPPNAFIL…QHQKMYPGYK (69 aa).

The protein localises to the nucleus. It localises to the cytoplasm. It is found in the cytoskeleton. Its subcellular location is the microtubule organizing center. The protein resides in the spindle pole body. Functionally, mating type proteins are sequence specific DNA-binding proteins that act as master switches in yeast differentiation by controlling gene expression in a cell type-specific fashion. Positive regulator of MFM genes. The HMG box recognizes the DNA sequence 5'-AACAAAG-3'. Required for conjugation and efficient meiosis. In Schizosaccharomyces pombe (Fission yeast), this protein is Mating-type M-specific polypeptide Mc (mat3-Mc).